The primary structure comprises 267 residues: MEMO1 family protein aq_890 (267 aa).

This sequence belongs to the MEMO1 family.

This Aquifex aeolicus (strain VF5) protein is MEMO1 family protein aq_890.